The sequence spans 357 residues: Homeobox protein HMX3 (357 aa).

2 disordered regions span residues Met1–Pro58 and Leu129–Lys229. Pro residues predominate over residues Pro16–Lys27. 2 stretches are compositionally biased toward basic and acidic residues: residues Pro130–Leu140 and Thr149–Asp173. Phosphoserine occurs at positions 153 and 180. Residues Ala191–Ala209 show a composition bias toward low complexity. Basic and acidic residues predominate over residues Glu210–Pro223. The homeobox DNA-binding region spans Lys227–Leu286.

The protein belongs to the HMX homeobox family.

The protein resides in the nucleus. Its function is as follows. Transcription factor involved in specification of neuronal cell types and which is required for inner ear and hypothalamus development. Binds to the 5'-CAAGTG-3' core sequence. Controls semicircular canal formation in the inner ear. Also required for hypothalamic/pituitary axis of the CNS. In Homo sapiens (Human), this protein is Homeobox protein HMX3 (HMX3).